We begin with the raw amino-acid sequence, 218 residues long: Cytidylate kinase (218 aa).

Residue 11-19 (GPGASGKGT) participates in ATP binding.

Belongs to the cytidylate kinase family. Type 1 subfamily.

Its subcellular location is the cytoplasm. The enzyme catalyses CMP + ATP = CDP + ADP. It catalyses the reaction dCMP + ATP = dCDP + ADP. The sequence is that of Cytidylate kinase from Neisseria gonorrhoeae (strain ATCC 700825 / FA 1090).